The sequence spans 175 residues: Adenine phosphoribosyltransferase (175 aa).

Belongs to the purine/pyrimidine phosphoribosyltransferase family. As to quaternary structure, homodimer.

Its subcellular location is the cytoplasm. The enzyme catalyses AMP + diphosphate = 5-phospho-alpha-D-ribose 1-diphosphate + adenine. Its pathway is purine metabolism; AMP biosynthesis via salvage pathway; AMP from adenine: step 1/1. In terms of biological role, catalyzes a salvage reaction resulting in the formation of AMP, that is energically less costly than de novo synthesis. The chain is Adenine phosphoribosyltransferase from Maricaulis maris (strain MCS10) (Caulobacter maris).